The sequence spans 481 residues: Putative amino-acid transporter CPE0389 (481 aa).

A run of 13 helical transmembrane segments spans residues 7 to 27 (LGVI…GVYN), 36 to 56 (ASAG…WFIA), 87 to 107 (FLMA…YAVL), 127 to 147 (LSIA…LAGV), 156 to 176 (IGTI…LFSF), 208 to 228 (STML…VVSG), 241 to 261 (FLGF…PLGV), 289 to 309 (VIMN…WTVM), 338 to 358 (FSLL…HFAG), 364 to 384 (MLSI…LYLF), 401 to 421 (RKYA…LIYA), 422 to 442 (AGIN…PVFI), and 461 to 481 (YFAI…FKFM).

It belongs to the amino acid-polyamine-organocation (APC) superfamily. Basic amino acid/polyamine antiporter (APA) (TC 2.A.3.2) family.

Its subcellular location is the cell membrane. Could be an amino acid transporter. This chain is Putative amino-acid transporter CPE0389, found in Clostridium perfringens (strain 13 / Type A).